Reading from the N-terminus, the 306-residue chain is MSTIIKTTDLTKMYGSQKSVDHLNINVKQGDIYGFLGRNGAGKTTTIRMLLGLIKPTSGQIEIFGENFFKNKKEILRRIGSIVEVPGFYANLTARENLLINAKIIGIHKKNAIDEVLEIVGLQHETKKLVGKFSLGMKQRLGIARALLHYPELLILDEPTNGLDPIGIKEMRRLIHSLAKERNITIFISSHILSEIEQLVDHVGIIHEGKLLEEIPFDHLKKRNRKYLEFQLSDQNKAVVLMEQHFDIHDYEVHQDGIIRVYSHLGQQGKLNKLFVENGIDVLKITMSEDSLEDYFVKLIGGGTIG.

In terms of domain architecture, ABC transporter spans 5–233 (IKTTDLTKMY…NRKYLEFQLS (229 aa)). Residue 37–44 (GRNGAGKT) coordinates ATP.

The protein belongs to the ABC transporter superfamily.

Its function is as follows. Part of the binding-protein-dependent transport system for bacitracin that confer resistance to this antibiotic. Probably responsible for energy coupling to the transport system. The chain is Bacitracin transport ATP-binding protein BcrA (bcrA) from Bacillus licheniformis.